A 235-amino-acid polypeptide reads, in one-letter code: Putative homeobox-leucine zipper protein ATHB-51 (235 aa).

Positions 74–133 (EMIKKKRLTSGQLASLERSFQEEIKLDSDRKVKLSRELGLQPRQIAVWFQNRRARWKAKQ) form a DNA-binding region, homeobox. The leucine-zipper stretch occupies residues 134 to 162 (LEQLYDSLRQEYDVVSREKQMLHDEVKKL).

This sequence belongs to the HD-ZIP homeobox family. Class I subfamily. As to expression, widely expressed.

The protein localises to the nucleus. Its function is as follows. Putative transcription factor. In Arabidopsis thaliana (Mouse-ear cress), this protein is Putative homeobox-leucine zipper protein ATHB-51 (ATHB-51).